The primary structure comprises 194 residues: Rho-related protein racC (194 aa).

Positions 17, 19, 20, 21, 22, 34, 36, 39, 64, 120, 122, 163, and 164 each coordinate GTP. Thr21 provides a ligand contact to Mg(2+). 2 consecutive short sequence motifs (switch) follow at residues 30–41 (RKFPEDYIPTVF) and 61–79 (DTAG…YSSA). Thr39 contacts Mg(2+). A Cysteine methyl ester modification is found at Cys191. The S-geranylgeranyl cysteine moiety is linked to residue Cys191. Positions 192 to 194 (ALL) are cleaved as a propeptide — removed in mature form.

This sequence belongs to the small GTPase superfamily. Rho family. Interacts (GTP-bound form) with PAK4 (via CRIB domain). Interacts (GTP-bound form) with PAK5 (via CRIB domain). The cofactor is Mg(2+).

The protein resides in the cell membrane. The protein localises to the cytoplasm. It is found in the cytoskeleton. The catalysed reaction is GTP + H2O = GDP + phosphate + H(+). Regulated by guanine nucleotide exchange factors (GEFs) which promote the exchange of bound GDP for free GTP, GTPase activating proteins (GAPs) which increase the GTP hydrolysis activity, and GDP dissociation inhibitors which inhibit the dissociation of the nucleotide from the GTPase. Its function is as follows. Small GTPase which cycles between active GTP-bound and inactive GDP-bound states. This is Rho-related protein racC from Entamoeba histolytica (strain ATCC 30459 / HM-1:IMSS / ABRM).